We begin with the raw amino-acid sequence, 63 residues long: Metallothionein-like protein type 3 (63 aa).

It belongs to the metallothionein superfamily. Type 15 family.

In terms of biological role, metallothioneins have a high content of cysteine residues that bind various heavy metals. In Actinidia deliciosa (Kiwi), this protein is Metallothionein-like protein type 3.